The sequence spans 184 residues: Dual specificity protein phosphatase 22 (184 aa).

A lipid anchor (N-myristoyl glycine) is attached at G2. One can recognise a Tyrosine-protein phosphatase domain in the interval 4-144; it reads GMNKILPGLY…LQEFEKHEVH (141 aa). S58 carries the phosphoserine modification. C88 acts as the Phosphocysteine intermediate in catalysis. Positions 89, 90, 92, 93, and 94 each coordinate a protein.

The protein belongs to the protein-tyrosine phosphatase family. Non-receptor class dual specificity subfamily. As to quaternary structure, monomer. Interacts with LCK; the interaction is direct. Interacts with UBR2; the interaction is direct. Post-translationally, myristoylation regulates subcellular location, and is necessary for activation of JNK. As to expression, ubiquitous. Highest expression seen in heart, placenta, lung, liver, kidney and pancreas.

Its subcellular location is the cytoplasm. The enzyme catalyses O-phospho-L-tyrosyl-[protein] + H2O = L-tyrosyl-[protein] + phosphate. The catalysed reaction is O-phospho-L-seryl-[protein] + H2O = L-seryl-[protein] + phosphate. It carries out the reaction O-phospho-L-threonyl-[protein] + H2O = L-threonyl-[protein] + phosphate. Its function is as follows. Dual specificity phosphatase; can dephosphorylate both phosphotyrosine and phosphoserine or phosphothreonine residues. Activates the JNK signaling pathway. Inhibits T-cell receptor signaling and T-cell mediated immune responses, acting, at least in part, by inducing degradation of E3 ubiquitin ligase UBR2. Dephosphorylates and thereby induces 'Lys-48'-linked ubiquitination of UBR2, leading to proteasomal degradation of UBR2. Dephosphorylates and thereby inactivates tyrosine kinase LCK. Inhibits UBR2-mediated 'Lys-63'-linked ubiquitination of LCK. May play a role in B-cell receptor (BCR) signaling and B-cell function. This Homo sapiens (Human) protein is Dual specificity protein phosphatase 22 (DUSP22).